The sequence spans 623 residues: Chaperone protein DnaK (623 aa).

Position 175 is a phosphothreonine; by autocatalysis (T175). Residues 580 to 623 form a disordered region; the sequence is PEGAQGAGFDPNNMGGANAGNASAENDKKDDNVVDADYKVEDDK. A compositionally biased stretch (low complexity) spans 591–603; sequence NNMGGANAGNASA. The span at 604–623 shows a compositional bias: basic and acidic residues; it reads ENDKKDDNVVDADYKVEDDK.

This sequence belongs to the heat shock protein 70 family.

Functionally, acts as a chaperone. The protein is Chaperone protein DnaK of Clostridium botulinum (strain Okra / Type B1).